The primary structure comprises 529 residues: MLPLLLPLPVTPPPPLPSPTLTLAPASAPRRRLVLLAAAAPHHHHHHRRRRVYRRQRAAPTQTRAPRRTLSASNAARGEEDLEEAIYEFMRRSDKPGAFPTRAELVAAGRADLAAAVDACGGWLSLGWSSGGAEAGRASSSVGVHPDYPPEAGAAAAAGGASDLAQGAVWASSREAEASPSGRQPETEEEETETKFGTGLDGMLTRLQRERERVRPPLPRSSDGAGGERDNVALMGQSGAPSHSATGGRYTPKVPDNGNIHSYHPQNGALEHNKSSKSLTNDAWRTWSLDKGGFSDFQAAEIHSTNSRKSFRHDGLDILAQDDVHGPSNGVAVHDYDINDVDSERDDIHARLQNLELDLTAALHTLRSRFDKVISDMSEGDGAKAPNGLSDDWEFEETKVMQAQEELRSIRAKIAVLEGKMALEIIEKNKIIEEKQRRLDEAEKALSELRTVYIVWSNPASEVLLTGSFDGWTSQRRMERSERGTFSLNLRLYPGRYEIKFIVDGVWRNDPLRPLVSNNGHENNLLTVT.

Disordered regions lie at residues M1 to T22, A39 to R77, and Q166 to S275. The transit peptide at M1 to S71 directs the protein to the chloroplast. The span at P9–S18 shows a compositional bias: pro residues. A compositionally biased stretch (basic residues) spans P41–R57. The stretch at V400–V452 forms a coiled coil.

As to quaternary structure, interacts with SKIPA. Interacts with ISA1. Expressed in leaves, stems and panicles. Expressed at lower levels in roots and developing seeds.

The protein resides in the plastid. It localises to the chloroplast. Functionally, involved in compound starch granule formation and starch synthesis in endosperm. May act as a regulatory scaffolding protein and affect starch synthesis and compound starch granule formation through direct interaction with isoamylase 1 (ISA1). Binds starch, amylopectin and amylose through its C-terminal carbohydrate-binding domain (CBM) in vitro. The polypeptide is Protein FLOURY ENDOSPERM 6, chloroplastic (Oryza sativa subsp. japonica (Rice)).